Here is a 331-residue protein sequence, read N- to C-terminus: Putative heat stress transcription factor A-6a (331 aa).

The interval 135-160 (RRGAGTGSTTPRAVNCGGGGGEGEVE) is disordered. Residues 156–238 (EGEVERLRRD…VERKKRRMLA (83 aa)) are a coiled coil. Residues 162 to 212 (LRRDKEALARELARLRRQQQEARAQLLDMERRVRGTERRQEQCTEFLARAL) form a hydrophobic repeat HR-A/B region. Residues 230 to 235 (ERKKRR) carry the Nuclear localization signal motif. Positions 246–253 (LTFEALAL) match the Nuclear export signal motif. An AHA1 motif is present at residues 270–279 (DMIWYELLGE). The short motif at 305-313 (AEPWEEMGE) is the AHA2 element.

This sequence belongs to the HSF family. Class A subfamily. As to quaternary structure, homotrimer. Exhibits temperature-dependent phosphorylation.

It localises to the cytoplasm. Its subcellular location is the nucleus. Its function is as follows. Transcriptional regulator that specifically binds DNA of heat shock promoter elements (HSE). This Oryza sativa subsp. japonica (Rice) protein is Putative heat stress transcription factor A-6a (HSFA6A).